We begin with the raw amino-acid sequence, 368 residues long: WD repeat-containing protein wdr-5.1 (368 aa).

Positions methionine 1–isoleucine 64 are disordered. Residues proline 16 to proline 42 are compositionally biased toward low complexity. 7 WD repeats span residues glycine 77–threonine 116, glycine 119–threonine 158, glycine 161–threonine 200, alanine 203–threonine 242, aspartate 246–glutamine 285, glycine 288–serine 330, and glycine 333–serine 368.

In Caenorhabditis briggsae, this protein is WD repeat-containing protein wdr-5.1.